The sequence spans 88 residues: Small muscular protein (88 aa).

The tract at residues 22–66 (MGAFRPGAGQPPRRKECTPEVEEGVPPTSDEEKKPIPGAKKLPGP) is disordered.

It belongs to the SMPX family. In terms of tissue distribution, preferentially and abundantly expressed in heart and skeletal muscle.

In terms of biological role, plays a role in the regulatory network through which muscle cells coordinate their structural and functional states during growth, adaptation, and repair. The sequence is that of Small muscular protein (SMPX) from Homo sapiens (Human).